The following is a 442-amino-acid chain: MEPQNIKPHTPELSRNTALFERAKKLIPGGVNSPVRAFKAVGGTPRFVQRAQGAYFWDADDQRYIDYIGSWGPMILGHGHPAVLASVQKALLDGFSYGAPTEREVELAEELVRLVPSLEMVRLVSSGTEAAMSAIRLARGATGRSKIIKFEGCYHGHADALLVKAGSGLATFGNPTSAGVPPEVVQHTLVLEYNHLAQLEEAFALHGSAIACLMIEPIAGNMNFVRASIPFMQRCRELCTQYGALLVFDEVMTGFRVALGGAQSVYAKSIPGFKPDMTVLGKVIGGGMPLAAFGGTRAVMEQLAPLGPVYQAGTLSGNPVATACGLATLREIQKPGFYEALGERTRGLVAGLTQAANKAGVPFCGDSEGGMFGFFLLGQLPQNYATVMTTDGPAFNRFFHAMLASGVYYAPALYEAGFVSSAHSAADIEATVDAAAKFFAGA.

Residue K282 is modified to N6-(pyridoxal phosphate)lysine.

Belongs to the class-III pyridoxal-phosphate-dependent aminotransferase family. HemL subfamily. In terms of assembly, homodimer. It depends on pyridoxal 5'-phosphate as a cofactor.

The protein localises to the cytoplasm. It catalyses the reaction (S)-4-amino-5-oxopentanoate = 5-aminolevulinate. It participates in porphyrin-containing compound metabolism; protoporphyrin-IX biosynthesis; 5-aminolevulinate from L-glutamyl-tRNA(Glu): step 2/2. The polypeptide is Glutamate-1-semialdehyde 2,1-aminomutase (Polaromonas sp. (strain JS666 / ATCC BAA-500)).